The chain runs to 126 residues: Aspartate 1-decarboxylase (126 aa).

The active-site Schiff-base intermediate with substrate; via pyruvic acid is S25. Position 25 is a pyruvic acid (Ser) (S25). T57 contacts substrate. Y58 serves as the catalytic Proton donor. 73 to 75 contributes to the substrate binding site; that stretch reads GGA.

The protein belongs to the PanD family. In terms of assembly, heterooctamer of four alpha and four beta subunits. It depends on pyruvate as a cofactor. Is synthesized initially as an inactive proenzyme, which is activated by self-cleavage at a specific serine bond to produce a beta-subunit with a hydroxyl group at its C-terminus and an alpha-subunit with a pyruvoyl group at its N-terminus.

Its subcellular location is the cytoplasm. The catalysed reaction is L-aspartate + H(+) = beta-alanine + CO2. It functions in the pathway cofactor biosynthesis; (R)-pantothenate biosynthesis; beta-alanine from L-aspartate: step 1/1. Catalyzes the pyruvoyl-dependent decarboxylation of aspartate to produce beta-alanine. In Xanthomonas campestris pv. campestris (strain ATCC 33913 / DSM 3586 / NCPPB 528 / LMG 568 / P 25), this protein is Aspartate 1-decarboxylase.